Consider the following 160-residue polypeptide: MSGGAGIPEVPGIDASGLRLGIVASTWHSRICDALLAGARKVAADSGIDGPTVVRVLGAIEIPVVVQELARHHDAVVALGVVIRGDTPHFDYVCNSVTQGLTRIALDTSTPVGNGVLTTNTEKQALDRAGLPTSAEDKGAQAAAAALTTALTLLNLRSRI.

5-amino-6-(D-ribitylamino)uracil-binding positions include Trp-27, 59 to 61 (AIE), and 81 to 83 (VVI). 86–87 (DT) contributes to the (2S)-2-hydroxy-3-oxobutyl phosphate binding site. Residue His-89 is the Proton donor of the active site. Residue Asn-114 coordinates 5-amino-6-(D-ribitylamino)uracil. Arg-128 contributes to the (2S)-2-hydroxy-3-oxobutyl phosphate binding site.

It belongs to the DMRL synthase family. As to quaternary structure, homopentamer.

It catalyses the reaction (2S)-2-hydroxy-3-oxobutyl phosphate + 5-amino-6-(D-ribitylamino)uracil = 6,7-dimethyl-8-(1-D-ribityl)lumazine + phosphate + 2 H2O + H(+). Its pathway is cofactor biosynthesis; riboflavin biosynthesis; riboflavin from 2-hydroxy-3-oxobutyl phosphate and 5-amino-6-(D-ribitylamino)uracil: step 1/2. Catalyzes the formation of 6,7-dimethyl-8-ribityllumazine by condensation of 5-amino-6-(D-ribitylamino)uracil with 3,4-dihydroxy-2-butanone 4-phosphate. This is the penultimate step in the biosynthesis of riboflavin. The sequence is that of 6,7-dimethyl-8-ribityllumazine synthase from Mycobacterium leprae (strain Br4923).